The chain runs to 142 residues: Nucleoside diphosphate kinase (142 aa).

ATP-binding residues include Lys10, Phe58, Arg86, Thr92, Arg103, and Asn113. The active-site Pros-phosphohistidine intermediate is the His116.

The protein belongs to the NDK family. Homotetramer. Requires Mg(2+) as cofactor.

The protein localises to the cytoplasm. The catalysed reaction is a 2'-deoxyribonucleoside 5'-diphosphate + ATP = a 2'-deoxyribonucleoside 5'-triphosphate + ADP. It catalyses the reaction a ribonucleoside 5'-diphosphate + ATP = a ribonucleoside 5'-triphosphate + ADP. Its function is as follows. Major role in the synthesis of nucleoside triphosphates other than ATP. The ATP gamma phosphate is transferred to the NDP beta phosphate via a ping-pong mechanism, using a phosphorylated active-site intermediate. In Ehrlichia chaffeensis (strain ATCC CRL-10679 / Arkansas), this protein is Nucleoside diphosphate kinase.